A 554-amino-acid chain; its full sequence is Glucose-6-phosphate isomerase (554 aa).

Glu359 (proton donor) is an active-site residue. Active-site residues include His390 and Lys518.

It belongs to the GPI family.

The protein resides in the cytoplasm. It catalyses the reaction alpha-D-glucose 6-phosphate = beta-D-fructose 6-phosphate. It functions in the pathway carbohydrate biosynthesis; gluconeogenesis. The protein operates within carbohydrate degradation; glycolysis; D-glyceraldehyde 3-phosphate and glycerone phosphate from D-glucose: step 2/4. Catalyzes the reversible isomerization of glucose-6-phosphate to fructose-6-phosphate. The protein is Glucose-6-phosphate isomerase of Ectopseudomonas mendocina (strain ymp) (Pseudomonas mendocina).